The chain runs to 339 residues: Retroviral-like aspartic protease 1 (339 aa).

Residues 1-188 constitute a propeptide that is removed on maturation; the sequence is MRNPGGPGWA…SEPEEILFAN (188 aa). Residues 34–53 are disordered; that stretch reads VPAPFNSSRQGKNTAQPTEP. Residues 38–53 show a composition bias toward polar residues; sequence FNSSRQGKNTAQPTEP. N39 is a glycosylation site (N-linked (GlcNAc...) asparagine). A helical membrane pass occupies residues 55-75; the sequence is LSSVIAPTLFCAFLYLACVTA. In terms of domain architecture, Peptidase A2 spans 205-286; sequence VRFLVDSGAQ…AEEAIIGTDV (82 aa). The active site involves D210. N274 is a glycosylation site (N-linked (GlcNAc...) asparagine). A propeptide spanning residues 325–339 is cleaved from the precursor; sequence LIEEEEGSSAPEGSH.

Homodimer. Post-translationally, undergoes autocleavage which is necessary for activation of the protein. As to expression, highly expressed in stratified epithelia in skin, tongue, esophagus, forestomach and vagina. Also expressed in trachea, urinary bladder and thymus. Undetectable in simple epithelia. Within the epidermis, expressed exclusively in the granular layer (at protein level). Levels are elevated in benign skin tumors but are down-regulated in squamous cell carcinomas.

Its subcellular location is the membrane. Functionally, protease responsible for filaggrin processing, essential for the maintenance of a proper epidermis organization. In Mus musculus (Mouse), this protein is Retroviral-like aspartic protease 1.